A 255-amino-acid chain; its full sequence is NAD(P)H-quinone oxidoreductase subunit K, chloroplastic (255 aa).

[4Fe-4S] cluster-binding residues include Cys-47, Cys-48, Cys-112, and Cys-143.

The protein belongs to the complex I 20 kDa subunit family. As to quaternary structure, NDH is composed of at least 16 different subunits, 5 of which are encoded in the nucleus. [4Fe-4S] cluster is required as a cofactor.

It is found in the plastid. The protein localises to the chloroplast thylakoid membrane. The enzyme catalyses a plastoquinone + NADH + (n+1) H(+)(in) = a plastoquinol + NAD(+) + n H(+)(out). It carries out the reaction a plastoquinone + NADPH + (n+1) H(+)(in) = a plastoquinol + NADP(+) + n H(+)(out). Its function is as follows. NDH shuttles electrons from NAD(P)H:plastoquinone, via FMN and iron-sulfur (Fe-S) centers, to quinones in the photosynthetic chain and possibly in a chloroplast respiratory chain. The immediate electron acceptor for the enzyme in this species is believed to be plastoquinone. Couples the redox reaction to proton translocation, and thus conserves the redox energy in a proton gradient. The protein is NAD(P)H-quinone oxidoreductase subunit K, chloroplastic of Zygnema circumcarinatum (Green alga).